Consider the following 645-residue polypeptide: Ethylene response sensor 2 (645 aa).

4 helical membrane-spanning segments follow: residues 5–25 (LLVQ…VTAA), 54–74 (VGDF…VYFV), 86–106 (VVCE…LAGF), and 125–145 (LTGI…PLLL). Residues Cys97 and His101 each contribute to the Cu cation site. Positions 190–346 (DRHTILYTTL…VVADQVAVAI (157 aa)) constitute a GAF domain. Residues 389-623 (MMSDAMRCPV…VFRFQLRRSM (235 aa)) enclose the Histidine kinase domain.

Belongs to the ethylene receptor family. As to quaternary structure, heteromer with ETR1. Cu cation is required as a cofactor. In terms of processing, autophosphorylated predominantly on Ser residues. As to expression, expressed in etiolated seedlings, leaves, roots and stems. Highly expressed in flowers, stamens, pollen cells, tapetum cells, carpels and ovules.

The protein resides in the endoplasmic reticulum membrane. Ethylene receptor related to bacterial two-component regulators. Acts as a redundant negative regulator of ethylene signaling. In Arabidopsis thaliana (Mouse-ear cress), this protein is Ethylene response sensor 2 (ERS2).